The following is a 107-amino-acid chain: Replication initiation control protein YabA (107 aa).

Zn(2+) is bound by residues His-81, Cys-83, Cys-97, and Cys-100.

Belongs to the YabA family. In terms of assembly, homotetramer. Interacts with both DnaA and DnaN, acting as a bridge between these two proteins. Zn(2+) serves as cofactor.

The protein localises to the cytoplasm. It is found in the nucleoid. Involved in control of chromosome replication initiation. Inhibits the cooperative binding of DnaA to the oriC region, thus negatively regulating initiation of chromosome replication. Inhibits the ability of DnaA-ATP to form a helix on DNA; does not disassemble preformed DnaA-DNA helices. Decreases the residence time of DnaA on the chromosome at its binding sites (oriC, replication forks and promoter-binding sites). Tethers DnaA to the replication machinery via the DNA polymerase beta sliding clamp subunit (dnaN). Associates with oriC and other DnaA targets on the chromosome in a DnaA-dependent manner. In Streptococcus pyogenes serotype M1, this protein is Replication initiation control protein YabA.